The following is a 492-amino-acid chain: Solute carrier family 2, facilitated glucose transporter member 1 (492 aa).

An N-acetylmethionine modification is found at Met-1. Topologically, residues Met-1–Arg-11 are cytoplasmic. A helical membrane pass occupies residues Leu-12–Ile-33. Residues Asn-34 to Ser-66 lie on the Extracellular side of the membrane. The N-linked (GlcNAc...) asparagine glycan is linked to Asn-45. Residues Leu-67–Val-87 traverse the membrane as a helical segment. Over Asn-88–Phe-90 the chain is Cytoplasmic. A helical transmembrane segment spans residues Gly-91 to Phe-112. The Extracellular portion of the chain corresponds to Ser-113–Glu-120. Residues Met-121–Val-144 traverse the membrane as a helical segment. Topologically, residues Gly-145–Ala-155 are cytoplasmic. Residues Leu-156–Leu-176 traverse the membrane as a helical segment. Gln-161 lines the D-glucose pocket. Residues Asp-177–Leu-185 are Extracellular-facing. The chain crosses the membrane as a helical span at residues Trp-186 to Phe-206. The Cytoplasmic segment spans residues Cys-207–Pro-271. Phosphoserine is present on Ser-226. The helical transmembrane segment at Ile-272–Tyr-293 threads the bilayer. D-glucose-binding positions include Gln-282–Gln-283 and Asn-288. Residues Ser-294–Pro-306 are Extracellular-facing. The helical transmembrane segment at Val-307–Val-328 threads the bilayer. Asn-317 is a D-glucose binding site. At Glu-329 to Arg-334 the chain is on the cytoplasmic side. A helical transmembrane segment spans residues Thr-335 to Leu-355. The Extracellular portion of the chain corresponds to Ala-356–Ser-365. A helical transmembrane segment spans residues Tyr-366 to Trp-388. D-glucose is bound by residues Glu-380 and Trp-388. At Phe-389 to Pro-401 the chain is on the cytoplasmic side. Residues Ala-402 to Phe-422 traverse the membrane as a helical segment. Residues Gln-423–Cys-429 are Extracellular-facing. Residues Gly-430 to Phe-450 form a helical membrane-spanning segment. Position 465 is a phosphoserine (Ser-465). The interval Arg-468 to Val-492 is disordered. Thr-478 carries the phosphothreonine modification. The residue at position 490 (Ser-490) is a Phosphoserine.

Belongs to the major facilitator superfamily. Sugar transporter (TC 2.A.1.1) family. Glucose transporter subfamily. In terms of assembly, found in a complex with ADD2, DMTN and SLC2A1. Interacts (via C-terminus cytoplasmic region) with DMTN. Interacts with SNX27; the interaction is required when endocytosed to prevent degradation in lysosomes and promote recycling to the plasma membrane. Interacts with GIPC (via PDZ domain). Interacts with STOM. Interacts with SGTA (via Gln-rich region). Interacts with BSG. Interacts with SMIM43; the interaction may promote SLC2A1-mediated glucose transport to meet the energy needs of mesendoderm differentiation. Post-translationally, phosphorylation at Ser-226 by PKC promotes glucose uptake by increasing cell membrane localization.

The protein localises to the cell membrane. It is found in the photoreceptor inner segment. The enzyme catalyses D-glucose(out) = D-glucose(in). Its activity is regulated as follows. The uptake of glucose is inhibited by cytochalasin B. Glucose uptake is increased in response to phorbol ester 12-O-tetradecanoylphorbol-13-acetate (TPA) treatment: TPA-induced glucose uptake requires phosphorylation at Ser-226. Facilitative glucose transporter, which is responsible for constitutive or basal glucose uptake. Has a very broad substrate specificity; can transport a wide range of aldoses including both pentoses and hexoses. Most important energy carrier of the brain: present at the blood-brain barrier and assures the energy-independent, facilitative transport of glucose into the brain. In association with BSG and NXNL1, promotes retinal cone survival by increasing glucose uptake into photoreceptors. Required for mesendoderm differentiation. The sequence is that of Solute carrier family 2, facilitated glucose transporter member 1 from Sus scrofa (Pig).